Reading from the N-terminus, the 70-residue chain is uncharacterized protein (70 aa).

This is an uncharacterized protein from Bacillus subtilis (strain 168).